A 159-amino-acid chain; its full sequence is MSYSITTPSHFVFLSSAWADPIELINLCTNALGNQFQTQQARTVVQRQFSEVWKPSPQVTVRFPDRDFKVYRYNAVLDPLVTALLGAFDTRNRIIEVENQANPTTAETLDATRRVDDATVAIRSAINNLMVELIRGTGSYNRSSFESSSGLVWTSGPAT.

At serine 2 the chain carries N-acetylserine; by host.

Belongs to the virgaviridae capsid protein family.

The protein localises to the virion. Its function is as follows. Capsid protein self-assembles to form rod-shaped virions about 18 nm in diameter with a central canal enclosing the viral genomic RNA. The protein is Capsid protein (CP) of Tobacco mosaic virus (strain 06) (TMV-06).